The chain runs to 225 residues: Non-structural protein V (225 aa).

The segment covering 145–157 has biased composition (polar residues); it reads SGPSLTDQASSKD. The segment at 145–172 is disordered; it reads SGPSLTDQASSKDPNFKRGGEIDGRHKG. Residues 158-169 show a composition bias toward basic and acidic residues; the sequence is PNFKRGGEIDGR. Positions 174, 193, 197, 209, 211, 214, 218, and 221 each coordinate Zn(2+).

This sequence belongs to the paramyxoviruses V protein family.

The protein resides in the host cytoplasm. Its function is as follows. Plays an essential role in the inhibition of host immune response. Prevents the establishment of cellular antiviral state by blocking interferon-alpha/beta (IFN-alpha/beta) production and signaling pathway. Interacts with host IFIH1/MDA5 and DHX58/LGP2 to inhibit the transduction pathway involved in the activation of IFN-beta promoter, thus protecting the virus against cell antiviral state. Efficiently blocks type I and type II IFN signaling following infection, probably by targeting host STAT1 for proteasomal degradation. The sequence is that of Non-structural protein V (P/V) from Simian virus 41 (SV41).